Reading from the N-terminus, the 136-residue chain is Holo-[acyl-carrier-protein] synthase (136 aa).

Mg(2+) contacts are provided by Asp-8 and Glu-57.

The protein belongs to the P-Pant transferase superfamily. AcpS family. Mg(2+) is required as a cofactor.

The protein resides in the cytoplasm. It carries out the reaction apo-[ACP] + CoA = holo-[ACP] + adenosine 3',5'-bisphosphate + H(+). Its function is as follows. Transfers the 4'-phosphopantetheine moiety from coenzyme A to a Ser of acyl-carrier-protein. The protein is Holo-[acyl-carrier-protein] synthase of Azorhizobium caulinodans (strain ATCC 43989 / DSM 5975 / JCM 20966 / LMG 6465 / NBRC 14845 / NCIMB 13405 / ORS 571).